Consider the following 215-residue polypeptide: Redox-sensing transcriptional repressor Rex 2 (215 aa).

Positions 15-54 (VYLRYLKMLGDSGVKRIKSREFSEMIQIPSATIRRDFSHV) form a DNA-binding region, H-T-H motif. 89–94 (GCGNLG) contacts NAD(+).

Belongs to the transcriptional regulatory Rex family. As to quaternary structure, homodimer.

It localises to the cytoplasm. Its function is as follows. Modulates transcription in response to changes in cellular NADH/NAD(+) redox state. The chain is Redox-sensing transcriptional repressor Rex 2 from Enterococcus faecalis (strain ATCC 700802 / V583).